A 220-amino-acid chain; its full sequence is Probable metallo-hydrolase YybB (220 aa).

Positions 67, 69, 71, 72, 139, 158, and 200 each coordinate Zn(2+).

Belongs to the metallo-beta-lactamase superfamily. The cofactor is Zn(2+).

The sequence is that of Probable metallo-hydrolase YybB (yybB) from Bacillus subtilis (strain 168).